The primary structure comprises 219 residues: GTP-binding protein Rit1 (219 aa).

Residues 28–35 (GAGGVGKS), 75–79 (DTAGQ), and 134–137 (NKSD) contribute to the GTP site.

It belongs to the small GTPase superfamily. Ras family. As to quaternary structure, interacts with AFDN, the C-terminal domain of RALGDS and RLF, but not with RIN1 and PIK3CA. RLF binds exclusively to the active GTP-bound form. Strongly interacts with BRAF, but only weakly with RAF1. BARF and RAF1 association is dependent upon the GTP-bound state. Interacts with RGL3. In terms of tissue distribution, expressed in many tissues.

It is found in the cell membrane. The enzyme catalyses GTP + H2O = GDP + phosphate + H(+). With respect to regulation, alternates between an inactive form bound to GDP and an active form bound to GTP. In terms of biological role, plays a crucial role in coupling NGF stimulation to the activation of both EPHB2 and MAPK14 signaling pathways and in NGF-dependent neuronal differentiation. Involved in ELK1 transactivation through the Ras-MAPK signaling cascade that mediates a wide variety of cellular functions, including cell proliferation, survival, and differentiation. This is GTP-binding protein Rit1 (Rit1) from Mus musculus (Mouse).